The chain runs to 348 residues: Inositol 2-dehydrogenase/D-chiro-inositol 3-dehydrogenase (348 aa).

This sequence belongs to the Gfo/Idh/MocA family. As to quaternary structure, homotetramer.

The enzyme catalyses myo-inositol + NAD(+) = scyllo-inosose + NADH + H(+). The catalysed reaction is 1D-chiro-inositol + NAD(+) = scyllo-inosine + NADH + H(+). It functions in the pathway polyol metabolism; myo-inositol degradation into acetyl-CoA; acetyl-CoA from myo-inositol: step 1/7. Involved in the oxidation of myo-inositol (MI) and D-chiro-inositol (DCI) to 2-keto-myo-inositol (2KMI or 2-inosose) and 1-keto-D-chiro-inositol (1KDCI), respectively. The protein is Inositol 2-dehydrogenase/D-chiro-inositol 3-dehydrogenase of Halalkalibacterium halodurans (strain ATCC BAA-125 / DSM 18197 / FERM 7344 / JCM 9153 / C-125) (Bacillus halodurans).